We begin with the raw amino-acid sequence, 409 residues long: MHWGVGFASSRPCVVDLSWNQSISFFGWWAGSEEPFSFYGDIIAFPLQDYGGIMAGLGSDPWWKKTLYLTGGALLAAAAYLLHELLVIRKQQEIDSKDAIILHQFARPNNGVPSLSPFCLKMETYLRMADLPYQNYFGGKLSAQGKMPWIEYNHEKVSGTEFIIDFLEEKLGVNLNKNLGPHERAISRAVTKMVEEHFYWTLAYCQWVDNLNETRKMLSLSGGGPFSNLLRWVVCHITKGIVKREMHGHGIGRFSEEEIYMLMEKDMRSLAGLLGDKKYIMGPKLSTLDATVFGHLAQAMWTLPGTRPERLIKGELINLAMYCERIRRKFWPEWHHDDDNTIYESEESSEGSKTHTPLLDFSFYSRTETFEDEGAENSFSRTPDTDFTGHSLFDSDVDMDDYTDHEQCK.

Residues 68-88 form a helical membrane-spanning segment; the sequence is YLTGGALLAAAAYLLHELLVI. Positions 372-409 are disordered; it reads DEGAENSFSRTPDTDFTGHSLFDSDVDMDDYTDHEQCK.

This sequence belongs to the FAX family.

It is found in the membrane. Its function is as follows. May play a role in axonal development. This Homo sapiens (Human) protein is Failed axon connections homolog (FAXC).